A 286-amino-acid chain; its full sequence is MSNSDYAKDVLVSADWVESHLDEFQSDDPAYRLVEVDVDTEAYDESHAPGAIGFNWESQLQDQTTRDVLTKEDFEDLLGSHGISEDSTVVLYGDNSNWFAAYTYWQFKYYGHENVHLMNGGRDYWVDNDYPTTDEIPSFPEQDYSAKGPFEDIRAYRDDVEKAVDKGLPLVDVRSPEEFSGEILAPPGLQETAQRGGHIPGASNISWAATVNDDGTFKSADELRDLYADQGIEGDESTIAYCRIGERSSIAWFALHELLGYENVTNYDGSWTEWGNLVGAPVEKGN.

Residues 27 to 134 enclose the Rhodanese 1 domain; it reads DDPAYRLVEV…WVDNDYPTTD (108 aa). Residues Lys162 and Lys166 each participate in a glycyl lysine isopeptide (Lys-Gly) (interchain with G-Cter in SAMP2) cross-link. One can recognise a Rhodanese 2 domain in the interval 164–283; that stretch reads VDKGLPLVDV…WGNLVGAPVE (120 aa). The Cysteine persulfide intermediate role is filled by Cys242. Residue Arg247 coordinates substrate.

It carries out the reaction thiosulfate + hydrogen cyanide = thiocyanate + sulfite + 2 H(+). Functionally, may be a sulfotransferase involved in the formation of thiosulfate. This is Putative thiosulfate sulfurtransferase (tssA) from Haloferax volcanii (strain ATCC 29605 / DSM 3757 / JCM 8879 / NBRC 14742 / NCIMB 2012 / VKM B-1768 / DS2) (Halobacterium volcanii).